We begin with the raw amino-acid sequence, 1461 residues long: Periaxin (1461 aa).

S7 is subject to Phosphoserine. A PDZ domain is found at 16–99 (LVEIIVETEA…YKVSFCLKRT (84 aa)). A Nuclear export signal motif is present at residues 70 to 84 (VFFENFKYEDALRLL). Residues 118–196 (KGPRAKVAKL…RLQLPRLRVR (79 aa)) carry the Nuclear localization signal motif. A Phosphoserine modification is found at S133. 55 repeat units span residues 431–435 (GPEVK), 439–443 (GPEVK), 447–451 (APEVK), 455–459 (VPEAA), 463–467 (VRLPE), 468–472 (VELPK), 473–477 (VSEMK), 481–485 (VPEMA), 486–490 (VPEVR), 494–498 (VELPK), 499–503 (VSEMK), 507–511 (VPEMA), 512–516 (VPEVR), 520–524 (VQLLK), 525–529 (VSEMK), 533–537 (VPEMA), 538–542 (VPEVR), 546–550 (VQLPK), 551–555 (VSEMK), 559–563 (VSEVA), 564–568 (VPEVR), 572–576 (VQLPK), 577–581 (VPEMK), 582–586 (VPEMK), 590–594 (VPEMK), 595–599 (LPEMK), 600–604 (LPEVQ), 608–612 (VPEMA), 613–617 (VPDVH), 618–622 (LPEVQ), 626–630 (VPEMK), 631–635 (LPEMK), 636–640 (LPEVK), 644–648 (VPEMA), 649–653 (VPDVH), 654–658 (LPEVQ), 662–666 (VPEMK), 670–674 (MPEMA), 675–679 (VPEVR), 683–687 (VQLPK), 688–692 (VSEMK), 696–700 (VPEMA), 701–705 (VPDVH), 706–710 (LPEVQ), 714–718 (VCEMK), 719–723 (VPDMK), 724–728 (LPEIK), 732–736 (VPEMA), 737–741 (VPDVH), 742–746 (LPEVQ), 750–754 (VSEIR), 755–759 (LPEMQ), 760–764 (VPKVP), 771–775 (APEVK), and 779–783 (APEVQ). A 55 X 5 AA approximate tandem repeats of [LVMAG]-[PSREQC]-[EDKL]-[LIVMAP]-[AQKHRPE]; that may have a tripeptide spacer of [LV]-P-[KER] region spans residues 431–783 (GPEVKVPKGP…VKLPRAPEVQ (353 aa)). Phosphoserine is present on residues S900 and S1082. The segment covering 1318-1327 (EGAEEGEKAK) has biased composition (basic and acidic residues). The interval 1318–1461 (EGAEEGEKAK…RMEGAQAAAV (144 aa)) is disordered. Residues S1349, S1351, S1363, S1401, S1407, and S1439 each carry the phosphoserine modification. Acidic residues predominate over residues 1352-1363 (PEEEEEEEEEGS).

It belongs to the periaxin family. In terms of assembly, homodimer (via PDZ domain). Interacts with SCN10A. Found in a complex with SCN10A. Interacts with DRP2. Identified in a dystroglycan complex that contains at least PRX, DRP2, UTRN, DMD and DAG1. Detected in a complex composed of at least EZR, AHNAK, PPL and PRX. Identified in a complex with EZR, AHNAK, BFSP1, BFSP2, ANK2, PLEC, VIM and spectrin. In terms of tissue distribution, detected in spinal cord. Isoform 1 and isoform 2 are found in sciatic nerve and Schwann cells.

It localises to the cell membrane. The protein resides in the nucleus. The protein localises to the cytoplasm. Its subcellular location is the cell junction. Scaffolding protein that functions as part of a dystroglycan complex in Schwann cells, and as part of EZR and AHNAK-containing complexes in eye lens fiber cells. Required for the maintenance of the peripheral myelin sheath that is essential for normal transmission of nerve impulses and normal perception of sensory stimuli. Required for normal transport of MBP mRNA from the perinuclear to the paranodal regions. Required for normal remyelination after nerve injury. Required for normal elongation of Schwann cells and normal length of the internodes between the nodes of Ranvier. The demyelinated nodes of Ranvier permit saltatory transmission of nerve impulses; shorter internodes cause slower transmission of nerve impulses. Required for the formation of appositions between the abaxonal surface of the myelin sheath and the Schwann cell plasma membrane; the Schwann cell cytoplasm is restricted to regions between these appositions. Required for the formation of Cajal bands and of Schmidt-Lanterman incisures that correspond to short, cytoplasm-filled regions on myelinated nerves. Recruits DRP2 to the Schwann cell plasma membrane. Required for normal protein composition of the eye lens fiber cell plasma membrane and normal eye lens fiber cell morphology. In Homo sapiens (Human), this protein is Periaxin (PRX).